Here is a 573-residue protein sequence, read N- to C-terminus: DEAD-box ATP-dependent RNA helicase 47A (573 aa).

The Q motif signature appears at 131–159 (KSFEELGLPPLLIDRLNKEGLTAPTEVQS). One can recognise a Helicase ATP-binding domain in the interval 162 to 362 (IPIISQKHDA…RSWGHDPVLV (201 aa)). 175-182 (SYTGSGKT) contributes to the ATP binding site. Residues 293–296 (DEVD) carry the DEAD box motif. One can recognise a Helicase C-terminal domain in the interval 421 to 565 (TLRRCIHALE…PCEFTEGKLL (145 aa)).

This sequence belongs to the DEAD box helicase family.

The enzyme catalyses ATP + H2O = ADP + phosphate + H(+). The sequence is that of DEAD-box ATP-dependent RNA helicase 47A from Oryza sativa subsp. japonica (Rice).